Reading from the N-terminus, the 116-residue chain is Large ribosomal subunit protein bL20 (116 aa).

The protein belongs to the bacterial ribosomal protein bL20 family.

Its function is as follows. Binds directly to 23S ribosomal RNA and is necessary for the in vitro assembly process of the 50S ribosomal subunit. It is not involved in the protein synthesizing functions of that subunit. The chain is Large ribosomal subunit protein bL20 from Mycoplasmopsis synoviae (strain 53) (Mycoplasma synoviae).